We begin with the raw amino-acid sequence, 404 residues long: Argininosuccinate synthase (404 aa).

ATP-binding positions include 10-18 (AYSGGVDTS) and alanine 38. Tyrosine 89 is an L-citrulline binding site. Glycine 119 serves as a coordination point for ATP. Residues threonine 121, asparagine 125, and aspartate 126 each contribute to the L-aspartate site. Position 125 (asparagine 125) interacts with L-citrulline. L-citrulline is bound by residues arginine 129, serine 177, serine 186, glutamate 262, and tyrosine 274.

It belongs to the argininosuccinate synthase family. Type 1 subfamily. Homotetramer.

The protein resides in the cytoplasm. It carries out the reaction L-citrulline + L-aspartate + ATP = 2-(N(omega)-L-arginino)succinate + AMP + diphosphate + H(+). The protein operates within amino-acid biosynthesis; L-arginine biosynthesis; L-arginine from L-ornithine and carbamoyl phosphate: step 2/3. The protein is Argininosuccinate synthase of Prochlorococcus marinus (strain MIT 9312).